The chain runs to 684 residues: MSTAASPAPAAPIRVAAGTTAGAAVRDAGLPGRGAPDAIVVVREADGRLRDLSWTPDADVEVVPVPADSEDGRSVIRHSAAHVLAQAVQDLFPEAKLGIGPPITDGFYYDFDVPRAFTPEDLEALEKKMRKIVKDGQLFERRVYESEEEARRELANEPYKLELVDDKSGDPEVMEVGGDELTAYDNLNPRTRERVWGDLCRGPHIPTTKYIPAFKLTRSSAAYWRGDQTNASLQRIYGTAWESQEALDRHLELIEEAQRRDHRKLGVELDLFSFPDELGSGLPVFHPKGGIVRKELEDYSRAKHLQAGYEFVNTPHITKEQLYVTSGHLEWYADGMFPAMHIDAEYDADGAVRKPGQNYYLKPMNCPMHHLIYRSRGRSYRELPLRLFEFGSVYRYEKSGVVHGLTRVRGMTQDDAHIYATREQMRDELTSLLQFVLDLLSDYGLDEYYLELSTKDPDKYVGSDEIWDEATETLREVAEASGLDLVPDPGGAAFYGPKISVQVKDALGRNWQMSTIQLDFNMPERFELEYTAADGSRQRPVLIHRALFGSIERFFGVLTEHYAGAFPAWLAPVQVVGIPVADAHIPYLEDVAAQLRSRGVRVEIDGSDDRMAKKIVNHTNQRVPFMLLAGDKDVAAGAVSFRFGDRTQINGVPRDEAVEAIVGWIVERRNTAPTADLVKAGAGT.

The region spanning 1-66 (MSTAASPAPA…DADVEVVPVP (66 aa)) is the TGS domain. Residues 261 to 567 (DHRKLGVELD…LTEHYAGAFP (307 aa)) are catalytic. 3 residues coordinate Zn(2+): C366, H417, and H544.

This sequence belongs to the class-II aminoacyl-tRNA synthetase family. In terms of assembly, homodimer. Zn(2+) is required as a cofactor.

It localises to the cytoplasm. It catalyses the reaction tRNA(Thr) + L-threonine + ATP = L-threonyl-tRNA(Thr) + AMP + diphosphate + H(+). Its function is as follows. Catalyzes the attachment of threonine to tRNA(Thr) in a two-step reaction: L-threonine is first activated by ATP to form Thr-AMP and then transferred to the acceptor end of tRNA(Thr). Also edits incorrectly charged L-seryl-tRNA(Thr). The protein is Threonine--tRNA ligase of Mycobacterium sp. (strain KMS).